The following is a 322-amino-acid chain: Putative A-type inclusion protein (322 aa).

Positions 284–322 are disordered; sequence LTTEATGSVEVAPPSTDVTEPISDVTPSVDVEPEHPPAF.

This sequence belongs to the chordopoxvirinae A26 protein family.

Functionally, encodes a truncated version of poxvirus A26 protein. The polypeptide is Putative A-type inclusion protein (Vaccinia virus (strain Copenhagen) (VACV)).